A 608-amino-acid chain; its full sequence is Glutamine--fructose-6-phosphate aminotransferase [isomerizing] (608 aa).

Catalysis depends on cysteine 2, which acts as the Nucleophile; for GATase activity. The Glutamine amidotransferase type-2 domain maps to 2 to 217 (CGIVGYIGKK…DNEFVLMTKD (216 aa)). 2 consecutive SIS domains span residues 284-424 (ISKE…EKGT) and 453-598 (IMKK…VDKP). The For Fru-6P isomerization activity role is filled by lysine 603.

In terms of assembly, homodimer.

The protein resides in the cytoplasm. The catalysed reaction is D-fructose 6-phosphate + L-glutamine = D-glucosamine 6-phosphate + L-glutamate. Its function is as follows. Catalyzes the first step in hexosamine metabolism, converting fructose-6P into glucosamine-6P using glutamine as a nitrogen source. The sequence is that of Glutamine--fructose-6-phosphate aminotransferase [isomerizing] from Clostridium tetani (strain Massachusetts / E88).